A 411-amino-acid chain; its full sequence is MQKLLQKITQGSLVKQIMVGLVAGIIVALVSPATASAVGLLGALFVGALKAVAPVLVLVLVMASIANHKHGQKTNIRPILFLYLLGTFAAALVAVVVSFMFPSNLALVAGNAEINPPGGIIEVLKGLLLSVVANPFQALISANYIGILAWAVGLGLALRHSSDTTKSLINDMSHAVTMVVRAVIRCAPLGIFGLVASTLAETGFGALWGYAQLLVVLIGCMLLVALVLNPLIVFWKIRRNPYPLVFACLRESGVTAFFTRSSAANIPVNMELCKKLNLNEDTYSVSIPLGATINMAGAAITITVLTLAAVHTLGIPVDVPTALLLSVVAAVCACGASGVAGGSLLLIPLACNMFGIPNDVAMQVVAVGFIIGVLQDSAETALNSSTDVLFTAAACQAEDQRLADEDPLKVR.

8 helical membrane passes run 17–37, 41–61, 79–99, 138–158, 189–209, 214–234, 295–315, and 327–347; these read IMVG…TASA, LGAL…LVLV, ILFL…VVSF, ALIS…GLAL, LGIF…ALWG, LVVL…LIVF, MAGA…TLGI, and VVAA…LLLI.

This sequence belongs to the dicarboxylate/amino acid:cation symporter (DAACS) (TC 2.A.23) family.

The protein resides in the cell inner membrane. It carries out the reaction L-serine(in) + Na(+)(in) = L-serine(out) + Na(+)(out). The enzyme catalyses L-threonine(in) + Na(+)(in) = L-threonine(out) + Na(+)(out). In terms of biological role, involved in the import of serine and threonine into the cell, with the concomitant import of sodium (symport system). This Serratia proteamaculans (strain 568) protein is Serine/threonine transporter SstT.